Reading from the N-terminus, the 396-residue chain is Ornithine aminotransferase (396 aa).

The residue at position 255 (K255) is an N6-(pyridoxal phosphate)lysine.

Belongs to the class-III pyridoxal-phosphate-dependent aminotransferase family. OAT subfamily. Pyridoxal 5'-phosphate is required as a cofactor.

The protein resides in the cytoplasm. It catalyses the reaction a 2-oxocarboxylate + L-ornithine = L-glutamate 5-semialdehyde + an L-alpha-amino acid. The protein operates within amino-acid biosynthesis; L-proline biosynthesis; L-glutamate 5-semialdehyde from L-ornithine: step 1/1. Functionally, catalyzes the interconversion of ornithine to glutamate semialdehyde. The polypeptide is Ornithine aminotransferase (Staphylococcus carnosus (strain TM300)).